A 236-amino-acid polypeptide reads, in one-letter code: 2,3,4,5-tetrahydropyridine-2,6-dicarboxylate N-acetyltransferase (236 aa).

It belongs to the transferase hexapeptide repeat family. DapH subfamily.

The catalysed reaction is (S)-2,3,4,5-tetrahydrodipicolinate + acetyl-CoA + H2O = L-2-acetamido-6-oxoheptanedioate + CoA. The protein operates within amino-acid biosynthesis; L-lysine biosynthesis via DAP pathway; LL-2,6-diaminopimelate from (S)-tetrahydrodipicolinate (acetylase route): step 1/3. Its function is as follows. Catalyzes the transfer of an acetyl group from acetyl-CoA to tetrahydrodipicolinate. The sequence is that of 2,3,4,5-tetrahydropyridine-2,6-dicarboxylate N-acetyltransferase from Clostridium botulinum (strain Loch Maree / Type A3).